We begin with the raw amino-acid sequence, 171 residues long: Crossover junction endodeoxyribonuclease RuvC (171 aa).

Catalysis depends on residues Asp7, Glu74, and Asp147. Positions 7, 74, and 147 each coordinate Mg(2+).

It belongs to the RuvC family. Homodimer which binds Holliday junction (HJ) DNA. The HJ becomes 2-fold symmetrical on binding to RuvC with unstacked arms; it has a different conformation from HJ DNA in complex with RuvA. In the full resolvosome a probable DNA-RuvA(4)-RuvB(12)-RuvC(2) complex forms which resolves the HJ. The cofactor is Mg(2+).

It localises to the cytoplasm. It catalyses the reaction Endonucleolytic cleavage at a junction such as a reciprocal single-stranded crossover between two homologous DNA duplexes (Holliday junction).. In terms of biological role, the RuvA-RuvB-RuvC complex processes Holliday junction (HJ) DNA during genetic recombination and DNA repair. Endonuclease that resolves HJ intermediates. Cleaves cruciform DNA by making single-stranded nicks across the HJ at symmetrical positions within the homologous arms, yielding a 5'-phosphate and a 3'-hydroxyl group; requires a central core of homology in the junction. The consensus cleavage sequence is 5'-(A/T)TT(C/G)-3'. Cleavage occurs on the 3'-side of the TT dinucleotide at the point of strand exchange. HJ branch migration catalyzed by RuvA-RuvB allows RuvC to scan DNA until it finds its consensus sequence, where it cleaves and resolves the cruciform DNA. This chain is Crossover junction endodeoxyribonuclease RuvC, found in Acidobacterium capsulatum (strain ATCC 51196 / DSM 11244 / BCRC 80197 / JCM 7670 / NBRC 15755 / NCIMB 13165 / 161).